We begin with the raw amino-acid sequence, 255 residues long: Taurine import ATP-binding protein TauB (255 aa).

Positions 2–229 constitute an ABC transporter domain; it reads LQISHLYADY…RFVAGESSRS (228 aa). 34 to 41 is a binding site for ATP; that stretch reads GPSGCGKT.

It belongs to the ABC transporter superfamily. Taurine importer (TC 3.A.1.17.1) family. In terms of assembly, the complex is composed of two ATP-binding proteins (TauB), two transmembrane proteins (TauC) and a solute-binding protein (TauA).

The protein resides in the cell inner membrane. It carries out the reaction taurine(out) + ATP + H2O = taurine(in) + ADP + phosphate + H(+). In terms of biological role, part of the ABC transporter complex TauABC involved in taurine import. Responsible for energy coupling to the transport system. This Shigella flexneri protein is Taurine import ATP-binding protein TauB.